The chain runs to 206 residues: Ribosomal RNA large subunit methyltransferase E (206 aa).

S-adenosyl-L-methionine is bound by residues G54, W56, D76, D94, and D118. The active-site Proton acceptor is the K158.

This sequence belongs to the class I-like SAM-binding methyltransferase superfamily. RNA methyltransferase RlmE family.

It is found in the cytoplasm. The enzyme catalyses uridine(2552) in 23S rRNA + S-adenosyl-L-methionine = 2'-O-methyluridine(2552) in 23S rRNA + S-adenosyl-L-homocysteine + H(+). In terms of biological role, specifically methylates the uridine in position 2552 of 23S rRNA at the 2'-O position of the ribose in the fully assembled 50S ribosomal subunit. In Methanosphaera stadtmanae (strain ATCC 43021 / DSM 3091 / JCM 11832 / MCB-3), this protein is Ribosomal RNA large subunit methyltransferase E.